A 155-amino-acid polypeptide reads, in one-letter code: Transmembrane protein C1orf162 (155 aa).

The disordered stretch occupies residues 1–28 (MGGNGSTCKPDTERQGTLSTAAPTTSPA). Residues 19–28 (STAAPTTSPA) are compositionally biased toward low complexity. A helical transmembrane segment spans residues 41-61 (ILAFCAGVLLTLLLIAFIFLI). Residues 92–114 (ADHSKPQAPDPHSDPPAKLSSIP) are disordered. Ser140 is modified (phosphoserine).

It localises to the membrane. The polypeptide is Transmembrane protein C1orf162 (C1orf162) (Homo sapiens (Human)).